We begin with the raw amino-acid sequence, 278 residues long: Probable velvet family sexual development regulator SCHCODRAFT_28806 (278 aa).

One can recognise a Velvet domain in the interval 51–255 (GRTIRASLDE…ARVGVRLSVR (205 aa)). Residues 257–278 (TGKKATTKRRKRSDSFDEDDSS) form a disordered region.

Belongs to the velvet family.

The protein localises to the nucleus. Its function is as follows. Velvet-domain-containing protein that probably acts as a positive regulator of sexual development. The protein is Probable velvet family sexual development regulator SCHCODRAFT_28806 of Schizophyllum commune (strain H4-8 / FGSC 9210) (Split gill fungus).